We begin with the raw amino-acid sequence, 222 residues long: MAIVVVTGTNTDVGKTIASAAVCQHYSRQGFRVVPVKPVQTGEPKGSGDAQTIEKLTGIVGKCFARFPEPLAPNLSAQRAGMQQLNLEEIVNKIRELDGPQTVVVVEGAGGLLVRLADSFTIADVAAQLDAPLIVVTNMALGSLNAAELTVEAAQRRGLKVLGLIGGSMPKNPDLATSLNVAEMEKVTGIPLWGSIAEGAGQLSKEAFCQLVEDLHLPTMWP.

12-17 (DVGKTI) contacts ATP. Position 16 (Thr16) interacts with Mg(2+). Lys37 is a catalytic residue. Position 41 (Thr41) interacts with substrate. ATP contacts are provided by residues Asp49, 107 to 110 (EGAG), 167 to 168 (GS), and 197 to 199 (AEG). Residues Asp49 and Glu107 each contribute to the Mg(2+) site.

Belongs to the dethiobiotin synthetase family. As to quaternary structure, homodimer. The cofactor is Mg(2+).

The protein resides in the cytoplasm. It catalyses the reaction (7R,8S)-7,8-diammoniononanoate + CO2 + ATP = (4R,5S)-dethiobiotin + ADP + phosphate + 3 H(+). It functions in the pathway cofactor biosynthesis; biotin biosynthesis; biotin from 7,8-diaminononanoate: step 1/2. Its function is as follows. Catalyzes a mechanistically unusual reaction, the ATP-dependent insertion of CO2 between the N7 and N8 nitrogen atoms of 7,8-diaminopelargonic acid (DAPA, also called 7,8-diammoniononanoate) to form a ureido ring. This Corynebacterium diphtheriae (strain ATCC 700971 / NCTC 13129 / Biotype gravis) protein is ATP-dependent dethiobiotin synthetase BioD.